The sequence spans 208 residues: MVFDELITEFDRGLRSIAGVSRMSRPVPKPAAAAPAELSAAERKHAAGLMRVNHVGEVCAQALYQAQKLTTSSAGLKEMFEHAAREEEDHLAWTAHRLKDLDSRPSLLNPLWYAGALAIGVVAGRLGDKVSLGFMAETERQVESHLDGHLSELPAADAESRAIVEQMRADEVKHGKSATDAGGIELPMPARMLMRAASKVMTSTAYYL.

The Fe cation site is built by Glu57, Glu87, His90, Glu139, Glu171, and His174.

This sequence belongs to the COQ7 family. Requires Fe cation as cofactor.

The protein resides in the cell membrane. It catalyses the reaction a 5-methoxy-2-methyl-3-(all-trans-polyprenyl)benzene-1,4-diol + AH2 + O2 = a 3-demethylubiquinol + A + H2O. The protein operates within cofactor biosynthesis; ubiquinone biosynthesis. In terms of biological role, catalyzes the hydroxylation of 2-nonaprenyl-3-methyl-6-methoxy-1,4-benzoquinol during ubiquinone biosynthesis. In Burkholderia mallei (strain NCTC 10229), this protein is 3-demethoxyubiquinol 3-hydroxylase.